The primary structure comprises 329 residues: Beta-ketoacyl-[acyl-carrier-protein] synthase III (329 aa).

Active-site residues include cysteine 114 and histidine 254. Residues 255–259 (QANLR) form an ACP-binding region. Residue asparagine 284 is part of the active site.

The protein belongs to the thiolase-like superfamily. FabH family. In terms of assembly, homodimer.

It is found in the cytoplasm. The enzyme catalyses malonyl-[ACP] + acetyl-CoA + H(+) = 3-oxobutanoyl-[ACP] + CO2 + CoA. It functions in the pathway lipid metabolism; fatty acid biosynthesis. Functionally, catalyzes the condensation reaction of fatty acid synthesis by the addition to an acyl acceptor of two carbons from malonyl-ACP. Catalyzes the first condensation reaction which initiates fatty acid synthesis and may therefore play a role in governing the total rate of fatty acid production. Possesses both acetoacetyl-ACP synthase and acetyl transacylase activities. Its substrate specificity determines the biosynthesis of branched-chain and/or straight-chain of fatty acids. This Roseiflexus sp. (strain RS-1) protein is Beta-ketoacyl-[acyl-carrier-protein] synthase III.